The following is a 157-amino-acid chain: 2-C-methyl-D-erythritol 2,4-cyclodiphosphate synthase (157 aa).

2 residues coordinate a divalent metal cation: aspartate 8 and histidine 10. Residues aspartate 8–histidine 10 and histidine 34–serine 35 each bind 4-CDP-2-C-methyl-D-erythritol 2-phosphate. Residue histidine 42 participates in a divalent metal cation binding. 4-CDP-2-C-methyl-D-erythritol 2-phosphate is bound by residues aspartate 56–glycine 58, phenylalanine 61–aspartate 65, alanine 100–alanine 106, threonine 132–glutamate 135, phenylalanine 139, and arginine 142.

This sequence belongs to the IspF family. Homotrimer. Requires a divalent metal cation as cofactor.

It carries out the reaction 4-CDP-2-C-methyl-D-erythritol 2-phosphate = 2-C-methyl-D-erythritol 2,4-cyclic diphosphate + CMP. It functions in the pathway isoprenoid biosynthesis; isopentenyl diphosphate biosynthesis via DXP pathway; isopentenyl diphosphate from 1-deoxy-D-xylulose 5-phosphate: step 4/6. Involved in the biosynthesis of isopentenyl diphosphate (IPP) and dimethylallyl diphosphate (DMAPP), two major building blocks of isoprenoid compounds. Catalyzes the conversion of 4-diphosphocytidyl-2-C-methyl-D-erythritol 2-phosphate (CDP-ME2P) to 2-C-methyl-D-erythritol 2,4-cyclodiphosphate (ME-CPP) with a corresponding release of cytidine 5-monophosphate (CMP). This chain is 2-C-methyl-D-erythritol 2,4-cyclodiphosphate synthase, found in Stutzerimonas stutzeri (strain A1501) (Pseudomonas stutzeri).